Here is a 217-residue protein sequence, read N- to C-terminus: Proteasome subunit beta (217 aa).

The propeptide at 1–14 is removed in mature form; by autocatalysis; sequence MIANNDQYKEYMKG. Thr-15 functions as the Nucleophile in the catalytic mechanism.

It belongs to the peptidase T1B family. The 20S proteasome core is composed of 14 alpha and 14 beta subunits that assemble into four stacked heptameric rings, resulting in a barrel-shaped structure. The two inner rings, each composed of seven catalytic beta subunits, are sandwiched by two outer rings, each composed of seven alpha subunits. The catalytic chamber with the active sites is on the inside of the barrel. Has a gated structure, the ends of the cylinder being occluded by the N-termini of the alpha-subunits. Is capped at one or both ends by the proteasome regulatory ATPase, PAN.

Its subcellular location is the cytoplasm. The catalysed reaction is Cleavage of peptide bonds with very broad specificity.. With respect to regulation, the formation of the proteasomal ATPase PAN-20S proteasome complex, via the docking of the C-termini of PAN into the intersubunit pockets in the alpha-rings, triggers opening of the gate for substrate entry. Interconversion between the open-gate and close-gate conformations leads to a dynamic regulation of the 20S proteasome proteolysis activity. Its function is as follows. Component of the proteasome core, a large protease complex with broad specificity involved in protein degradation. In Methanococcus aeolicus (strain ATCC BAA-1280 / DSM 17508 / OCM 812 / Nankai-3), this protein is Proteasome subunit beta.